Reading from the N-terminus, the 160-residue chain is Transcriptional repressor NrdR (160 aa).

Residues 1–11 (MRCPNCNSLDT) show a composition bias toward polar residues. Residues 1-20 (MRCPNCNSLDTQVKDSRPTE) form a disordered region. Residues 3–34 (CPNCNSLDTQVKDSRPTEDSSVIRRRRVCIAC) fold into a zinc finger. The 91-residue stretch at 49–139 (LTVIKRNGRR…VYRNFREAKD (91 aa)) folds into the ATP-cone domain.

Belongs to the NrdR family. Zn(2+) is required as a cofactor.

Functionally, negatively regulates transcription of bacterial ribonucleotide reductase nrd genes and operons by binding to NrdR-boxes. The protein is Transcriptional repressor NrdR of Rhodopseudomonas palustris (strain HaA2).